Consider the following 360-residue polypeptide: Ferredoxin--NADP reductase, leaf isozyme 1, chloroplastic (360 aa).

Residues 1–49 (MAAAISAAVSLPSSKSSSLLTKISSVSPQRIFLKKSTVCYRRVVSVKAQ) constitute a chloroplast transit peptide. Residues 81–203 (KNPYTGRCLL…TGPVGKEMLM (123 aa)) enclose the FAD-binding FR-type domain. Residues 139–142 (RLYS), 160–162 (CVK), Tyr166, and 177–179 (VCS) each bind FAD. Ser142 and Lys162 together coordinate NADP(+). Cys178 and Cys183 are oxidised to a cystine. The residue at position 179 (Ser179) is a Phosphoserine. A Phosphothreonine modification is found at Thr210. Thr218 serves as a coordination point for FAD. NADP(+)-binding positions include Thr218, 250-251 (VP), 280-281 (SR), Lys290, 319-320 (GL), and Glu358.

This sequence belongs to the ferredoxin--NADP reductase type 1 family. In terms of assembly, heterodimer with LFNR2. Interacts with PGRL1A and PGRL1B. Interacts with TIC62. Component of high molecular weight thylakoid LFNRs-containing protein complexes containing LIR1, LFNR1, LFNR2, TIC62 and TROL proteins. Interacts directly with LIR1 and TIC62; LIR1 increases the affinity of LFNR1 and LFNR2 for TIC62. Binds to YCF54 in chloroplasts. Requires FAD as cofactor. May form interchain disulfide bonds with LIR1. As to expression, expressed in shoots. Restricted to green tissues, being more abundant in siliques.

Its subcellular location is the plastid. It is found in the chloroplast stroma. The protein localises to the chloroplast thylakoid membrane. The catalysed reaction is 2 reduced [2Fe-2S]-[ferredoxin] + NADP(+) + H(+) = 2 oxidized [2Fe-2S]-[ferredoxin] + NADPH. It participates in energy metabolism; photosynthesis. Plays a key role in regulating the relative amounts of cyclic and non-cyclic electron flow to meet the demands of the plant for ATP and reducing power. Probable electron donor required for the MgProto monomethylester (MgProtoME) cyclase complex reaction to form protochlorophyllide, thus connecting chlorophyll synthesis with photosynthetic activity. The sequence is that of Ferredoxin--NADP reductase, leaf isozyme 1, chloroplastic from Arabidopsis thaliana (Mouse-ear cress).